Consider the following 290-residue polypeptide: N-acetylmannosamine kinase (290 aa).

ATP-binding positions include 5 to 12 (AIDIGGTK) and 132 to 139 (GVGGGVVS). Zn(2+)-binding residues include H156, C166, C168, and C173.

The protein belongs to the ROK (NagC/XylR) family. NanK subfamily. Homodimer.

The catalysed reaction is an N-acyl-D-mannosamine + ATP = an N-acyl-D-mannosamine 6-phosphate + ADP + H(+). Its pathway is amino-sugar metabolism; N-acetylneuraminate degradation; D-fructose 6-phosphate from N-acetylneuraminate: step 2/5. Functionally, catalyzes the phosphorylation of N-acetylmannosamine (ManNAc) to ManNAc-6-P. The sequence is that of N-acetylmannosamine kinase from Citrobacter koseri (strain ATCC BAA-895 / CDC 4225-83 / SGSC4696).